Here is a 264-residue protein sequence, read N- to C-terminus: Teichoic acids export ATP-binding protein TagH (264 aa).

An ABC transporter domain is found at 5-243 (VNIKNVTKEY…YEAFLNDFKK (239 aa)). 57–64 (GINGSGKS) contributes to the ATP binding site.

This sequence belongs to the ABC transporter superfamily. Teichoic acids exporter (TC 3.A.1.104.1) family. The complex is composed of two ATP-binding proteins (TagH) and two transmembrane proteins (TagG).

It localises to the cell membrane. The catalysed reaction is ATP + H2O + teichoic acidSide 1 = ADP + phosphate + teichoic acidSide 2.. Its function is as follows. Part of the ABC transporter complex TagGH involved in teichoic acids export. Responsible for energy coupling to the transport system. The sequence is that of Teichoic acids export ATP-binding protein TagH from Staphylococcus aureus (strain Mu50 / ATCC 700699).